A 353-amino-acid polypeptide reads, in one-letter code: UDP-N-acetylglucosamine--N-acetylmuramyl-(pentapeptide) pyrophosphoryl-undecaprenol N-acetylglucosamine transferase (353 aa).

UDP-N-acetyl-alpha-D-glucosamine contacts are provided by residues Thr10–Gly12, Asn124, Ser183, and Gln283.

This sequence belongs to the glycosyltransferase 28 family. MurG subfamily.

Its subcellular location is the cell inner membrane. It carries out the reaction di-trans,octa-cis-undecaprenyl diphospho-N-acetyl-alpha-D-muramoyl-L-alanyl-D-glutamyl-meso-2,6-diaminopimeloyl-D-alanyl-D-alanine + UDP-N-acetyl-alpha-D-glucosamine = di-trans,octa-cis-undecaprenyl diphospho-[N-acetyl-alpha-D-glucosaminyl-(1-&gt;4)]-N-acetyl-alpha-D-muramoyl-L-alanyl-D-glutamyl-meso-2,6-diaminopimeloyl-D-alanyl-D-alanine + UDP + H(+). Its pathway is cell wall biogenesis; peptidoglycan biosynthesis. Functionally, cell wall formation. Catalyzes the transfer of a GlcNAc subunit on undecaprenyl-pyrophosphoryl-MurNAc-pentapeptide (lipid intermediate I) to form undecaprenyl-pyrophosphoryl-MurNAc-(pentapeptide)GlcNAc (lipid intermediate II). This is UDP-N-acetylglucosamine--N-acetylmuramyl-(pentapeptide) pyrophosphoryl-undecaprenol N-acetylglucosamine transferase from Helicobacter pylori (strain HPAG1).